The chain runs to 543 residues: Adenosine deaminase 2 (543 aa).

The N-terminal stretch at 1–26 is a signal peptide; it reads MFLKFKNIFFIVLTLSIVFNGLIVNS. Residues 31–54 are compositionally biased toward low complexity; sequence INNKNNNNNNNNKDLSSSESGSSS. The tract at residues 31–58 is disordered; the sequence is INNKNNNNNNNNKDLSSSESGSSSDINP. Residue N126 is glycosylated (N-linked (GlcNAc...) asparagine). H144 and H146 together coordinate Zn(2+). N-linked (GlcNAc...) asparagine glycosylation is present at N179. Substrate is bound at residue 232 to 239; sequence WRKFDGIF. N-linked (GlcNAc...) asparagine glycosylation is found at N309 and N326. A substrate-binding site is contributed by G355. H389 contributes to the Zn(2+) binding site. The active-site Proton donor is the E392. The N-linked (GlcNAc...) asparagine glycan is linked to N397. H414 serves as the catalytic Proton acceptor. D471 contacts Zn(2+). Substrate is bound at residue D472. 2 N-linked (GlcNAc...) asparagine glycosylation sites follow: N508 and N514.

This sequence belongs to the metallo-dependent hydrolases superfamily. Adenosine and AMP deaminases family. ADGF subfamily. Zn(2+) serves as cofactor.

The protein localises to the secreted. The enzyme catalyses adenosine + H2O + H(+) = inosine + NH4(+). Adenosine deaminase that may contribute to the degradation of extracellular adenosine, a signaling molecule that controls a variety of cellular responses. May play a role in the regulation of cell proliferation. In Dictyostelium discoideum (Social amoeba), this protein is Adenosine deaminase 2.